Here is a 91-residue protein sequence, read N- to C-terminus: UPF0147 protein DKAM_0139 (91 aa).

This sequence belongs to the UPF0147 family.

The polypeptide is UPF0147 protein DKAM_0139 (Desulfurococcus amylolyticus (strain DSM 18924 / JCM 16383 / VKM B-2413 / 1221n) (Desulfurococcus kamchatkensis)).